Consider the following 179-residue polypeptide: Protein GrpE (179 aa).

The span at 1 to 10 (MSKKEEKQEE) shows a compositional bias: basic and acidic residues. Residues 1–23 (MSKKEEKQEELQEEMEAVDAAGV) form a disordered region.

Belongs to the GrpE family. As to quaternary structure, homodimer.

Its subcellular location is the cytoplasm. Functionally, participates actively in the response to hyperosmotic and heat shock by preventing the aggregation of stress-denatured proteins, in association with DnaK and GrpE. It is the nucleotide exchange factor for DnaK and may function as a thermosensor. Unfolded proteins bind initially to DnaJ; upon interaction with the DnaJ-bound protein, DnaK hydrolyzes its bound ATP, resulting in the formation of a stable complex. GrpE releases ADP from DnaK; ATP binding to DnaK triggers the release of the substrate protein, thus completing the reaction cycle. Several rounds of ATP-dependent interactions between DnaJ, DnaK and GrpE are required for fully efficient folding. This is Protein GrpE from Enterococcus faecalis (strain ATCC 700802 / V583).